A 404-amino-acid chain; its full sequence is MQQVNKVVLAYSGGVDTSVCIPYLKNEYGISEVVTFVADLGQGEDLELIRKKALNSGASKSIIGNLVSSFVERYAFPAIRANALYLDKYPLSTALARPLIAENLVNIAREINADAVAHGCTGKGNDQVRFDLAINALGPDLKIITPAREWNMSREEAILYGEKFGIPAPVSKKSPYSIDVNLLGRSIEAGILEDPMQEAPEDIFAMTSSINNSPESPLDIEIIFKNGFPVGINNEFLNPVEIIQKANVLAGEYGFGRIDMMEDRVVGIKSREIYETPGLLLLIKAHKELESITLNPDVIDFKGVVEKKWGQLVYQGFWFGPLKESLDAFIASTQTSVNGRVKIRLHKGNAIVIGRISENNSLYREDLATYSQDDVFKHSLAEGFIYMWGMSNKIWAELNSKKID.

ATP contacts are provided by residues 10-18 (AYSGGVDTS) and alanine 38. Tyrosine 89 serves as a coordination point for L-citrulline. Glycine 119 provides a ligand contact to ATP. L-aspartate contacts are provided by threonine 121, asparagine 125, and aspartate 126. Asparagine 125 serves as a coordination point for L-citrulline. Residues arginine 129, serine 177, serine 186, glutamate 262, and tyrosine 274 each coordinate L-citrulline.

The protein belongs to the argininosuccinate synthase family. Type 1 subfamily. As to quaternary structure, homotetramer.

Its subcellular location is the cytoplasm. It carries out the reaction L-citrulline + L-aspartate + ATP = 2-(N(omega)-L-arginino)succinate + AMP + diphosphate + H(+). Its pathway is amino-acid biosynthesis; L-arginine biosynthesis; L-arginine from L-ornithine and carbamoyl phosphate: step 2/3. This Prochlorococcus marinus (strain MIT 9312) protein is Argininosuccinate synthase.